The chain runs to 144 residues: MNFKYIVAVSFLIASAYARSEENDEQSLSQRDVLEEESLREIRGIGTKIIGGLKTAVKGALKELASTYVNGKRTAEDHEVMKRLEAVMRDLDSLDYPEEASERETRGFNQEEIANLFTKKEKRILGPVLGLVGSALGGLIKKIG.

The signal sequence occupies residues 1 to 18; it reads MNFKYIVAVSFLIASAYA. Residues 19–43 constitute a propeptide that is removed on maturation; it reads RSEENDEQSLSQRDVLEEESLREIR. Asn-70 is subject to Asparagine amide. The propeptide occupies 74–123; the sequence is TAEDHEVMKRLEAVMRDLDSLDYPEEASERETRGFNQEEIANLFTKKEKR. Ile-143 carries the isoleucine amide modification.

It belongs to the bombinin family. As to expression, expressed by the skin glands.

The protein localises to the secreted. Functionally, maximin-11 shows antimicrobial activity against bacteria and against the fungus C.albicans. It has little hemolytic activity. Its function is as follows. Maximin-H11 shows antimicrobial activity against bacteria and against the fungus C.albicans. Shows strong hemolytic activity. The polypeptide is Maximins 11/H11 (Bombina maxima (Giant fire-bellied toad)).